A 344-amino-acid polypeptide reads, in one-letter code: D-arabinose dehydrogenase [NAD(P)+] heavy chain (344 aa).

The Proton donor role is filled by Tyr-71. A substrate-binding site is contributed by His-131. The residue at position 151 (Thr-151) is a Phosphothreonine. 241 to 295 (SPLGSHGAPNLKIPLVKKLAEKYNVTGNDLLISYHIRQGTIVIPRSLNPVRISSS) contacts NADP(+).

The protein belongs to the aldo/keto reductase family. In terms of assembly, heterodimer of a heavy chain and a light chain.

The protein localises to the cytoplasm. It carries out the reaction D-arabinose + NADP(+) = D-arabinono-1,4-lactone + NADPH + H(+). The catalysed reaction is D-arabinose + NAD(+) = D-arabinono-1,4-lactone + NADH + H(+). Its function is as follows. Catalyzes the oxidation of D-arabinose, L-xylose, L-fucose and L-galactose in the presence of NADP(+). The polypeptide is D-arabinose dehydrogenase [NAD(P)+] heavy chain (ARA1) (Saccharomyces cerevisiae (strain ATCC 204508 / S288c) (Baker's yeast)).